Consider the following 204-residue polypeptide: Venom allergen 5 (204 aa).

Intrachain disulfides connect cysteine 4–cysteine 17, cysteine 8–cysteine 101, cysteine 26–cysteine 94, and cysteine 170–cysteine 187. Residues 45-189 (LKEHNDFRQK…WHKHYLVCNY (145 aa)) form the SCP domain.

It belongs to the CRISP family. Venom allergen 5-like subfamily. In terms of tissue distribution, expressed by the venom gland.

It is found in the secreted. The sequence is that of Venom allergen 5 from Vespula pensylvanica (Western yellow jacket).